The following is a 539-amino-acid chain: Phosphoenolpyruvate carboxykinase (ATP) (539 aa).

Arg-64, Tyr-206, and Lys-212 together coordinate substrate. ATP contacts are provided by residues Lys-212, His-231, and Gly-247–Thr-255. Mn(2+) is bound by residues Lys-212 and His-231. Asp-268 is a binding site for Mn(2+). ATP-binding positions include Glu-296, Arg-332, Arg-448–Ile-449, and Thr-454. Arg-332 contributes to the substrate binding site.

This sequence belongs to the phosphoenolpyruvate carboxykinase (ATP) family. As to quaternary structure, monomer. It depends on Mn(2+) as a cofactor.

The protein resides in the cytoplasm. It carries out the reaction oxaloacetate + ATP = phosphoenolpyruvate + ADP + CO2. Its pathway is carbohydrate biosynthesis; gluconeogenesis. Functionally, involved in the gluconeogenesis. Catalyzes the conversion of oxaloacetate (OAA) to phosphoenolpyruvate (PEP) through direct phosphoryl transfer between the nucleoside triphosphate and OAA. This Edwardsiella ictaluri (strain 93-146) protein is Phosphoenolpyruvate carboxykinase (ATP).